Reading from the N-terminus, the 70-residue chain is MTTNIVGKVKWFNPTKNFGFIEQENGGKDVFVHRSAVDAAGLAGLNEGQDVIFDLEDKNGKISAVNLRIK.

A CSD domain is found at 7–67 (GKVKWFNPTK…KNGKISAVNL (61 aa)).

It localises to the cytoplasm. In Rickettsia bellii (strain RML369-C), this protein is Cold shock-like protein CspA (cspA).